The following is a 274-amino-acid chain: Small ribosomal subunit biogenesis GTPase RsgA (274 aa).

The CP-type G domain maps to 58-215; sequence KNYLNRPKVA…LVDSPGFSIY (158 aa). GTP is bound by residues 108 to 111 and 158 to 166; these read SKLD and GHSGVGKST. 4 residues coordinate Zn(2+): Cys-238, Cys-243, His-245, and Cys-252.

The protein belongs to the TRAFAC class YlqF/YawG GTPase family. RsgA subfamily. As to quaternary structure, monomer. Associates with 30S ribosomal subunit, binds 16S rRNA. Zn(2+) is required as a cofactor.

The protein resides in the cytoplasm. Functionally, one of several proteins that assist in the late maturation steps of the functional core of the 30S ribosomal subunit. Helps release RbfA from mature subunits. May play a role in the assembly of ribosomal proteins into the subunit. Circularly permuted GTPase that catalyzes slow GTP hydrolysis, GTPase activity is stimulated by the 30S ribosomal subunit. This chain is Small ribosomal subunit biogenesis GTPase RsgA, found in Mycoplasmoides gallisepticum (strain R(low / passage 15 / clone 2)) (Mycoplasma gallisepticum).